A 64-amino-acid chain; its full sequence is Putative antitoxin VapB4 (64 aa).

This sequence belongs to the UPF0165 family.

In terms of biological role, possibly the antitoxin component of a type II toxin-antitoxin (TA) system. Its cognate toxin is VapC4 (Potential). The sequence is that of Putative antitoxin VapB4 (vapB4) from Archaeoglobus fulgidus (strain ATCC 49558 / DSM 4304 / JCM 9628 / NBRC 100126 / VC-16).